The primary structure comprises 504 residues: Glucose-6-phosphate isomerase (504 aa).

E333 acts as the Proton donor in catalysis. Catalysis depends on residues H364 and K473.

The protein belongs to the GPI family.

Its subcellular location is the cytoplasm. The catalysed reaction is alpha-D-glucose 6-phosphate = beta-D-fructose 6-phosphate. The protein operates within carbohydrate biosynthesis; gluconeogenesis. It participates in carbohydrate degradation; glycolysis; D-glyceraldehyde 3-phosphate and glycerone phosphate from D-glucose: step 2/4. Its function is as follows. Catalyzes the reversible isomerization of glucose-6-phosphate to fructose-6-phosphate. The chain is Glucose-6-phosphate isomerase from Stenotrophomonas maltophilia (strain R551-3).